The primary structure comprises 257 residues: UPF0246 protein Daro_2893 (257 aa).

Belongs to the UPF0246 family.

In Dechloromonas aromatica (strain RCB), this protein is UPF0246 protein Daro_2893.